Consider the following 109-residue polypeptide: Parvalbumin, muscle (109 aa).

Ala-1 carries the post-translational modification N-acetylalanine. EF-hand domains lie at 38-73 (KSPE…FTPD) and 77-109 (LSDK…VAES). Positions 51, 53, 55, 62, 90, 92, 94, 96, and 101 each coordinate Ca(2+).

The protein belongs to the parvalbumin family.

In muscle, parvalbumin is thought to be involved in relaxation after contraction. It binds two calcium ions. This Gallus gallus (Chicken) protein is Parvalbumin, muscle.